Consider the following 175-residue polypeptide: Alpha-crystallin B chain (175 aa).

N-acetylmethionine is present on M1. Position 19 is a phosphoserine (S19). S41 is a glycosylation site (O-linked (GlcNAc) serine). A phosphoserine mark is found at S45 and S59. The sHSP domain maps to 56 to 164 (RAPSWIDTGL…PERTIPITRE (109 aa)). Residue H83 coordinates Zn(2+). K92 is subject to N6-acetyllysine. Positions 104, 106, 111, and 119 each coordinate Zn(2+). A disordered region spans residues 139-175 (SDGVLTMNGPRKQASGPERTIPITREEKPAVTAAPKK). K166 carries the N6-acetyllysine modification. T170 carries O-linked (GlcNAc) threonine glycosylation.

The protein belongs to the small heat shock protein (HSP20) family. As to quaternary structure, heteromer composed of three CRYAA and one CRYAB subunits. Aggregates with homologous proteins, including the small heat shock protein HSPB1, to form large heteromeric complexes. Inter-subunit bridging via zinc ions enhances stability, which is crucial as there is no protein turn over in the lens. Interacts with HSPBAP1 and TTN/titin. Interacts with TMEM109; in the cellular response to DNA damage. Interacts with DES; binds rapidly during early stages of DES filament assembly and a reduced binding seen in the later stages. Interacts with ATP6V1A and with MTOR, forming a ternary complex.

Its subcellular location is the cytoplasm. It localises to the nucleus. The protein localises to the secreted. It is found in the lysosome. In terms of biological role, may contribute to the transparency and refractive index of the lens. Has chaperone-like activity, preventing aggregation of various proteins under a wide range of stress conditions. In lens epithelial cells, stabilizes the ATP6V1A protein, preventing its degradation by the proteasome. The protein is Alpha-crystallin B chain (CRYAB) of Ovis aries (Sheep).